The primary structure comprises 262 residues: Shikimate dehydrogenase (NADP(+)) (262 aa).

Shikimate-binding positions include 15–17 and threonine 62; that span reads SRS. Lysine 66 acts as the Proton acceptor in catalysis. Glutamate 78 lines the NADP(+) pocket. Residues asparagine 87 and aspartate 102 each coordinate shikimate. NADP(+)-binding positions include 126-130, 150-155, and methionine 214; these read GAGGA and NRTLAR. Residue tyrosine 216 participates in shikimate binding. Glycine 236 is a binding site for NADP(+).

It belongs to the shikimate dehydrogenase family. As to quaternary structure, homodimer.

It carries out the reaction shikimate + NADP(+) = 3-dehydroshikimate + NADPH + H(+). Its pathway is metabolic intermediate biosynthesis; chorismate biosynthesis; chorismate from D-erythrose 4-phosphate and phosphoenolpyruvate: step 4/7. Involved in the biosynthesis of the chorismate, which leads to the biosynthesis of aromatic amino acids. Catalyzes the reversible NADPH linked reduction of 3-dehydroshikimate (DHSA) to yield shikimate (SA). The sequence is that of Shikimate dehydrogenase (NADP(+)) from Acinetobacter baumannii (strain ATCC 17978 / DSM 105126 / CIP 53.77 / LMG 1025 / NCDC KC755 / 5377).